Reading from the N-terminus, the 351-residue chain is Peptide chain release factor 1 (351 aa).

Q229 carries the N5-methylglutamine modification.

Belongs to the prokaryotic/mitochondrial release factor family. Methylated by PrmC. Methylation increases the termination efficiency of RF1.

It localises to the cytoplasm. In terms of biological role, peptide chain release factor 1 directs the termination of translation in response to the peptide chain termination codons UAG and UAA. The sequence is that of Peptide chain release factor 1 from Cereibacter sphaeroides (strain ATCC 17025 / ATH 2.4.3) (Rhodobacter sphaeroides).